The primary structure comprises 509 residues: Heat shock 70 kDa protein 14 (509 aa).

It belongs to the heat shock protein 70 family. Component of ribosome-associated complex (RAC), a heterodimer composed of Hsp70/DnaK-type chaperone HSPA14 and Hsp40/DnaJ-type chaperone DNAJC2.

It localises to the cytoplasm. Its subcellular location is the cytosol. Its function is as follows. Component of the ribosome-associated complex (RAC), a complex involved in folding or maintaining nascent polypeptides in a folding-competent state. In the RAC complex, binds to the nascent polypeptide chain, while DNAJC2 stimulates its ATPase activity. The polypeptide is Heat shock 70 kDa protein 14 (HSPA14) (Bos taurus (Bovine)).